Consider the following 177-residue polypeptide: Large ribosomal subunit protein uL6 (177 aa).

This sequence belongs to the universal ribosomal protein uL6 family. In terms of assembly, part of the 50S ribosomal subunit.

Functionally, this protein binds to the 23S rRNA, and is important in its secondary structure. It is located near the subunit interface in the base of the L7/L12 stalk, and near the tRNA binding site of the peptidyltransferase center. This Rhodopseudomonas palustris (strain BisB5) protein is Large ribosomal subunit protein uL6.